The following is a 319-amino-acid chain: Phospho-N-acetylmuramoyl-pentapeptide-transferase (319 aa).

The next 9 membrane-spanning stretches (helical) occupy residues 5–25 (LIAFMISLVLSALLFPWLIIW), 51–71 (TMGGTVFVLSAAVATVAICAY), 79–99 (VWILLVALLGYGIIGFLDDGL), 119–139 (LLVAAGIVLLAASDNFDFALY), 149–169 (VVLFTLFEVFWLVGFSNAVNL), 173–193 (LDGLATGLSFIAYGTYAWLAF), 197–217 (NFGVLVFCMAVMGGLAAFFMF), 224–246 (IFMGDAGSLALGGGLAAVSIFLG), and 299–319 (VDLVFWLVGLVGSGIYLMIWG).

This sequence belongs to the glycosyltransferase 4 family. MraY subfamily. The cofactor is Mg(2+).

It localises to the cell membrane. The enzyme catalyses UDP-N-acetyl-alpha-D-muramoyl-L-alanyl-gamma-D-glutamyl-L-lysyl-D-alanyl-D-alanine + di-trans,octa-cis-undecaprenyl phosphate = Mur2Ac(oyl-L-Ala-gamma-D-Glu-L-Lys-D-Ala-D-Ala)-di-trans,octa-cis-undecaprenyl diphosphate + UMP. It functions in the pathway cell wall biogenesis; peptidoglycan biosynthesis. In terms of biological role, catalyzes the initial step of the lipid cycle reactions in the biosynthesis of the cell wall peptidoglycan: transfers peptidoglycan precursor phospho-MurNAc-pentapeptide from UDP-MurNAc-pentapeptide onto the lipid carrier undecaprenyl phosphate, yielding undecaprenyl-pyrophosphoryl-MurNAc-pentapeptide, known as lipid I. The sequence is that of Phospho-N-acetylmuramoyl-pentapeptide-transferase from Lactobacillus delbrueckii subsp. bulgaricus (strain ATCC BAA-365 / Lb-18).